We begin with the raw amino-acid sequence, 3164 residues long: Large tegument protein deneddylase (3164 aa).

Residues 1-273 (MGGGNNTNPG…SETYLQDEAF (273 aa)) are deubiquitination activity. A Peptidase C76 domain is found at 45-263 (VVTGARNQFA…TAAALHLYGA (219 aa)). Catalysis depends on residues Cys-65, Asp-197, and His-199. Residues 289-508 (AGLGEPCVGV…GEDDGPTVPA (220 aa)) are disordered. Residues 308–321 (GPHPPTAAQSPPPT) show a composition bias toward pro residues. Residues 343 to 353 (PEAKRPNRAPD) are compositionally biased toward basic and acidic residues. Pro residues predominate over residues 365 to 390 (PTDPPSADPPSADPPSAIPPPPPSAP). The span at 416-432 (GRHRARYSAGLPKRRRP) shows a compositional bias: basic residues. The interval 426-432 (LPKRRRP) is nuclear localization signal. The interaction with inner tegument protein stretch occupies residues 579 to 609 (LELCVIFFFERVLAFLIENGARTHTQAGVAG). The segment at 579-609 (LELCVIFFFERVLAFLIENGARTHTQAGVAG) is interaction with UL37. Disordered regions lie at residues 2296-2318 (QTLSPSGGREASPPAPPNALYRP), 2518-2552 (HPVYQRAPDDQSPSVPNPTPGPVDLVGAEGSLGPG), and 2583-3020 (ASDD…SLSG). Over residues 2653–2667 (QSSPAPPDATAPRPP) the composition is skewed to pro residues. The span at 2668-2680 (ASSRASAASSSGS) shows a compositional bias: low complexity. Residues 2681–2690 (RARRHRRARS) are compositionally biased toward basic residues. Residues 2722–2732 (PPAPPKPPEPA) are compositionally biased toward pro residues. Low complexity predominate over residues 2834–2843 (PAEPTSSSPA). Residues 2844 to 2866 (GPSPPPPAVQPVAPPPTSGPPPT) show a composition bias toward pro residues. Residues 2886–2897 (TRQPVATPTTSA) are compositionally biased toward polar residues. 35 repeat units span residues 2911 to 2912 (PQ), 2913 to 2914 (PQ), 2915 to 2916 (PQ), 2917 to 2918 (PQ), 2919 to 2920 (PQ), 2921 to 2922 (PQ), 2923 to 2924 (PQ), 2925 to 2926 (PQ), 2927 to 2928 (PQ), 2929 to 2930 (PQ), 2931 to 2932 (PQ), 2933 to 2934 (PQ), 2935 to 2936 (PQ), 2937 to 2938 (PQ), 2939 to 2940 (PQ), 2941 to 2942 (PQ), 2943 to 2944 (PQ), 2945 to 2946 (PQ), 2947 to 2948 (PQ), 2949 to 2950 (PQ), 2951 to 2952 (PQ), 2953 to 2954 (PQ), 2955 to 2956 (PQ), 2957 to 2958 (PQ), 2959 to 2960 (PQ), 2961 to 2962 (PQ), 2963 to 2964 (PQ), 2965 to 2966 (PQ), 2967 to 2968 (PQ), 2969 to 2970 (PQ), 2971 to 2972 (PQ), 2973 to 2974 (PQ), 2975 to 2976 (PQ), 2977 to 2978 (PQ), and 2979 to 2980 (PQ). Residues 2911–2980 (PQPQPQPQPQ…PQPQPQPQPQ (70 aa)) form a 35 X 2 AA tandem repeats of P-Q region. Over residues 2912–2978 (QPQPQPQPQP…PQPQPQPQPQ (67 aa)) the composition is skewed to pro residues. Residues 2999-3014 (NRPSVPASASSTNPRT) show a composition bias toward polar residues.

The protein belongs to the herpesviridae large tegument protein family. In terms of assembly, interacts with host CUL1 and CUL4A; these interactions inhibit the E3 ligase activity of cullins. Interacts with inner tegument protein. Interacts with capsid vertex specific component CVC2. Interacts with the major capsid protein/MCP. Interacts with VP16; this interaction is important for outer tegument association to the capsid. May form homodimers. In terms of processing, proteolytically processed, possibly into several polypeptides. Enzymatic activity is only detectable following cleavage of the UL36 protein, which occurs late during viral replication.

The protein resides in the virion tegument. It localises to the host cytoplasm. It is found in the host nucleus. It catalyses the reaction Thiol-dependent hydrolysis of ester, thioester, amide, peptide and isopeptide bonds formed by the C-terminal Gly of ubiquitin (a 76-residue protein attached to proteins as an intracellular targeting signal).. Its function is as follows. Large tegument protein that plays multiple roles in the viral cycle. During viral entry, remains associated with the capsid while most of the tegument is detached and participates in the capsid transport toward the host nucleus. Plays a role in the routing of the capsid at the nuclear pore complex and subsequent uncoating. Within the host nucleus, acts as a deneddylase and promotes the degradation of nuclear CRLs (cullin-RING ubiquitin ligases) and thereby stabilizes nuclear CRL substrates, while cytoplasmic CRLs remain unaffected. These modifications prevent host cell cycle S-phase progression and create a favorable environment allowing efficient viral genome replication. Participates later in the secondary envelopment of capsids. Indeed, plays a linker role for the association of the outer viral tegument to the capsids together with the inner tegument protein. This chain is Large tegument protein deneddylase, found in Human herpesvirus 1 (strain 17) (HHV-1).